Here is a 168-residue protein sequence, read N- to C-terminus: NADH-quinone oxidoreductase subunit B (168 aa).

[4Fe-4S] cluster is bound by residues Cys49, Cys50, Cys114, and Cys144.

Belongs to the complex I 20 kDa subunit family. As to quaternary structure, NDH-1 is composed of 14 different subunits. Subunits NuoB, C, D, E, F, and G constitute the peripheral sector of the complex. It depends on [4Fe-4S] cluster as a cofactor.

It is found in the cell membrane. The catalysed reaction is a quinone + NADH + 5 H(+)(in) = a quinol + NAD(+) + 4 H(+)(out). NDH-1 shuttles electrons from NADH, via FMN and iron-sulfur (Fe-S) centers, to quinones in the respiratory chain. Couples the redox reaction to proton translocation (for every two electrons transferred, four hydrogen ions are translocated across the cytoplasmic membrane), and thus conserves the redox energy in a proton gradient. This chain is NADH-quinone oxidoreductase subunit B, found in Wolbachia sp. subsp. Brugia malayi (strain TRS).